We begin with the raw amino-acid sequence, 277 residues long: Phosphoenolpyruvate synthase regulatory protein (277 aa).

An ADP-binding site is contributed by 157-164 (GVSRCGKT).

Belongs to the pyruvate, phosphate/water dikinase regulatory protein family. PSRP subfamily.

It catalyses the reaction [pyruvate, water dikinase] + ADP = [pyruvate, water dikinase]-phosphate + AMP + H(+). It carries out the reaction [pyruvate, water dikinase]-phosphate + phosphate + H(+) = [pyruvate, water dikinase] + diphosphate. Functionally, bifunctional serine/threonine kinase and phosphorylase involved in the regulation of the phosphoenolpyruvate synthase (PEPS) by catalyzing its phosphorylation/dephosphorylation. The protein is Phosphoenolpyruvate synthase regulatory protein of Salmonella gallinarum (strain 287/91 / NCTC 13346).